We begin with the raw amino-acid sequence, 337 residues long: GTP 3',8-cyclase (337 aa).

One can recognise a Radical SAM core domain in the interval 17-242 (TFQREYYYLR…RQKDRTDGPA (226 aa)). Arginine 26 is a binding site for GTP. Cysteine 33 and cysteine 37 together coordinate [4Fe-4S] cluster. Tyrosine 39 serves as a coordination point for S-adenosyl-L-methionine. Cysteine 40 lines the [4Fe-4S] cluster pocket. Arginine 76 lines the GTP pocket. Residue glycine 80 coordinates S-adenosyl-L-methionine. Residue threonine 107 coordinates GTP. Serine 131 provides a ligand contact to S-adenosyl-L-methionine. Residue lysine 168 coordinates GTP. Residue methionine 202 participates in S-adenosyl-L-methionine binding. Positions 265 and 268 each coordinate [4Fe-4S] cluster. 270–272 (RLR) lines the GTP pocket. Cysteine 282 contributes to the [4Fe-4S] cluster binding site.

The protein belongs to the radical SAM superfamily. MoaA family. In terms of assembly, monomer and homodimer. Requires [4Fe-4S] cluster as cofactor.

The enzyme catalyses GTP + AH2 + S-adenosyl-L-methionine = (8S)-3',8-cyclo-7,8-dihydroguanosine 5'-triphosphate + 5'-deoxyadenosine + L-methionine + A + H(+). It participates in cofactor biosynthesis; molybdopterin biosynthesis. Its function is as follows. Catalyzes the cyclization of GTP to (8S)-3',8-cyclo-7,8-dihydroguanosine 5'-triphosphate. This is GTP 3',8-cyclase from Mannheimia succiniciproducens (strain KCTC 0769BP / MBEL55E).